The following is a 262-amino-acid chain: Electron transfer flavoprotein beta subunit lysine methyltransferase (262 aa).

The transit peptide at 1 to 38 (MALSLGWKAHRNHCGLLLQALRSSGLLLFPCGQCPWRG) directs the protein to the mitochondrion.

This sequence belongs to the methyltransferase superfamily. ETFBKMT family. As to quaternary structure, interacts with HSPD1; this protein may possibly be a methylation substrate.

Its subcellular location is the cytoplasm. It localises to the mitochondrion matrix. It carries out the reaction L-lysyl-[protein] + 3 S-adenosyl-L-methionine = N(6),N(6),N(6)-trimethyl-L-lysyl-[protein] + 3 S-adenosyl-L-homocysteine + 3 H(+). Functionally, protein-lysine methyltransferase that selectively trimethylates the flavoprotein ETFB in mitochondria. Thereby, may negatively regulate the function of ETFB in electron transfer from Acyl-CoA dehydrogenases to the main respiratory chain. The polypeptide is Electron transfer flavoprotein beta subunit lysine methyltransferase (Homo sapiens (Human)).